Here is a 109-residue protein sequence, read N- to C-terminus: Non-structural protein NS-S (109 aa).

The protein belongs to the orthobunyavirus NS-S protein family.

In terms of biological role, inhibits host transcriptional machinery, by producing modifications to the phosphorylation state of the C-terminal domain (CTD) of RNA polymerase II. Inhibits phosphorylation at serine 2 in the heptapeptide repeat (YSPTSPS) of the CTD of RNA polymerase II, suggesting that the elongation step of transcription and/or 3'-end processing is prevented. Inhibition of host transcription machinery leads to shut off of host cell protein synthesis and inhibition of the host innate immune response. NSs also seems to be involved in the nuclear relocalization of host PABP1. This chain is Non-structural protein NS-S (N), found in Culex.